A 191-amino-acid polypeptide reads, in one-letter code: Ureidoglycolate lyase (191 aa).

This sequence belongs to the ureidoglycolate lyase family. Homodimer.

It carries out the reaction (S)-ureidoglycolate = urea + glyoxylate. It functions in the pathway nitrogen metabolism; (S)-allantoin degradation. Catalyzes the catabolism of the allantoin degradation intermediate (S)-ureidoglycolate, generating urea and glyoxylate. Involved in the utilization of allantoin as secondary nitrogen source when primary sources are limiting. In Schizosaccharomyces pombe (strain 972 / ATCC 24843) (Fission yeast), this protein is Ureidoglycolate lyase.